Reading from the N-terminus, the 804-residue chain is Probable replication endonuclease from prophage-like region 2 (804 aa).

Residues Tyr503 and Tyr507 each act as O-(5'-phospho-DNA)-tyrosine intermediate in the active site.

The protein belongs to the phage GPA family.

Possible endonuclease which induces a single-strand cut and initiates DNA replication. The chain is Probable replication endonuclease from prophage-like region 2 from Salmonella typhi.